A 395-amino-acid chain; its full sequence is Ketoisovalerate oxidoreductase subunit VorA (395 aa).

As to quaternary structure, heterotetramer of one alpha, one beta, one delta and one gamma chain.

The catalysed reaction is 3-methyl-2-oxobutanoate + 2 oxidized [2Fe-2S]-[ferredoxin] + CoA = 2-methylpropanoyl-CoA + 2 reduced [2Fe-2S]-[ferredoxin] + CO2 + H(+). This Pyrococcus abyssi (strain GE5 / Orsay) protein is Ketoisovalerate oxidoreductase subunit VorA (vorA).